Consider the following 621-residue polypeptide: Glucose 1,6-bisphosphate synthase (621 aa).

Alpha-D-glucose 1,6-bisphosphate contacts are provided by Arg73 and Ser175. The active-site Phosphoserine intermediate is Ser175. Mg(2+) contacts are provided by Ser175, Asp332, Asp334, and Asp336. Ser175 carries the post-translational modification Phosphoserine. Residues Asp336, Arg337, Glu433, Ser435, and Lys447 each coordinate alpha-D-glucose 1,6-bisphosphate.

The protein belongs to the phosphohexose mutase family. As to expression, expressed at highest levels in the brain and testis, at intermediate levels in thymus, spleen, lung and skeletal muscle, and at lowest levels in kidney, liver and heart.

It localises to the cytoplasm. Its subcellular location is the cytosol. The enzyme catalyses (2R)-3-phospho-glyceroyl phosphate + alpha-D-glucose 1-phosphate = alpha-D-glucose 1,6-bisphosphate + (2R)-3-phosphoglycerate + H(+). The catalysed reaction is alpha-D-glucose 6-phosphate + (2R)-3-phospho-glyceroyl phosphate = alpha-D-glucose 1,6-bisphosphate + (2R)-3-phosphoglycerate + H(+). It catalyses the reaction (2R)-3-phospho-glyceroyl phosphate + alpha-D-ribose 1-phosphate = alpha-D-ribose 1,5-bisphosphate + (2R)-3-phosphoglycerate + H(+). It carries out the reaction 2-deoxy-alpha-D-ribose 1-phosphate + (2R)-3-phospho-glyceroyl phosphate = 2-deoxy-alpha-D-ribose 1,5-bisphosphate + (2R)-3-phosphoglycerate + H(+). The enzyme catalyses (2R)-3-phospho-glyceroyl phosphate + alpha-D-mannose 1-phosphate = alpha-D-mannose 1,6-bisphosphate + (2R)-3-phosphoglycerate + H(+). In terms of biological role, glucose 1,6-bisphosphate synthase using 1,3-bisphosphoglycerate as a phosphate donor and a series of 1-phosphate sugars, including glucose 1-phosphate, mannose 1-phosphate, ribose 1-phosphate and deoxyribose 1-phosphate, as acceptors. In vitro, also exhibits very low phosphopentomutase and phosphoglucomutase activity which are most probably not physiologically relevant. The protein is Glucose 1,6-bisphosphate synthase of Mus musculus (Mouse).